The primary structure comprises 233 residues: Endo-1,4-beta-xylanase 1 (233 aa).

Residues M1–A20 form the signal peptide. An N-linked (GlcNAc...) asparagine glycan is attached at N27. One can recognise a GH11 domain in the interval Q40–Q230. E126 (nucleophile) is an active-site residue. Residue E217 is the Proton donor of the active site.

Belongs to the glycosyl hydrolase 11 (cellulase G) family.

It is found in the secreted. It catalyses the reaction Endohydrolysis of (1-&gt;4)-beta-D-xylosidic linkages in xylans.. It participates in glycan degradation; xylan degradation. In terms of biological role, endo-1,4-beta-xylanase involved in the hydrolysis of xylan, a major structural heterogeneous polysaccharide found in plant biomass representing the second most abundant polysaccharide in the biosphere, after cellulose. Accounts for approximately 70 percent of the endoxylanase activity in the culture filtrate. This Pyricularia grisea (Crabgrass-specific blast fungus) protein is Endo-1,4-beta-xylanase 1 (XYL1).